The sequence spans 196 residues: Heat shock protein beta-8 (196 aa).

Positions 1-28 (MADGQLPFPCSYPSRLRRDPFRDSPLSS) are disordered. Phosphoserine is present on residues serine 24 and serine 57. Threonine 63 carries the post-translational modification Phosphothreonine. Arginine 71 and arginine 78 each carry asymmetric dimethylarginine. The region spanning 74–185 (TATARFGVPA…PFGESSFNNE (112 aa)) is the sHSP domain. The disordered stretch occupies residues 176–196 (PFGESSFNNELPQDNQEVTCS). Polar residues predominate over residues 178 to 196 (GESSFNNELPQDNQEVTCS).

The protein belongs to the small heat shock protein (HSP20) family. In terms of assembly, monomer. Forms a ternary complex with BAG3 and HSPA1A. Component of the chaperone-assisted selective autophagy (CASA) complex consisting of BAG3, HSPA8/HSC70, HSPB8 and STUB1/CHIP. Interacts with HSPB1. Interacts with DNAJB6. Interacts with BAG3. In terms of processing, phosphorylated.

It is found in the cytoplasm. Its subcellular location is the nucleus. Its function is as follows. Involved in the chaperone-assisted selective autophagy (CASA), a crucial process for protein quality control, particularly in mechanical strained cells and tissues such as muscle. Displays temperature-dependent chaperone activity. This is Heat shock protein beta-8 (Hspb8) from Rattus norvegicus (Rat).